The chain runs to 305 residues: UDP-3-O-acyl-N-acetylglucosamine deacetylase (305 aa).

Residues His-79, His-238, and Asp-242 each contribute to the Zn(2+) site. The Proton donor role is filled by His-265.

Belongs to the LpxC family. Zn(2+) is required as a cofactor.

The enzyme catalyses a UDP-3-O-[(3R)-3-hydroxyacyl]-N-acetyl-alpha-D-glucosamine + H2O = a UDP-3-O-[(3R)-3-hydroxyacyl]-alpha-D-glucosamine + acetate. It functions in the pathway glycolipid biosynthesis; lipid IV(A) biosynthesis; lipid IV(A) from (3R)-3-hydroxytetradecanoyl-[acyl-carrier-protein] and UDP-N-acetyl-alpha-D-glucosamine: step 2/6. Its function is as follows. Catalyzes the hydrolysis of UDP-3-O-myristoyl-N-acetylglucosamine to form UDP-3-O-myristoylglucosamine and acetate, the committed step in lipid A biosynthesis. This Vibrio atlanticus (strain LGP32) (Vibrio splendidus (strain Mel32)) protein is UDP-3-O-acyl-N-acetylglucosamine deacetylase.